A 216-amino-acid chain; its full sequence is Imidazole glycerol phosphate synthase subunit HisH (216 aa).

A Glutamine amidotransferase type-1 domain is found at 2 to 216 (RVAIIDYGSG…LISNFLRWKP (215 aa)). Cysteine 88 serves as the catalytic Nucleophile. Catalysis depends on residues histidine 196 and glutamate 198.

In terms of assembly, heterodimer of HisH and HisF.

It localises to the cytoplasm. The enzyme catalyses 5-[(5-phospho-1-deoxy-D-ribulos-1-ylimino)methylamino]-1-(5-phospho-beta-D-ribosyl)imidazole-4-carboxamide + L-glutamine = D-erythro-1-(imidazol-4-yl)glycerol 3-phosphate + 5-amino-1-(5-phospho-beta-D-ribosyl)imidazole-4-carboxamide + L-glutamate + H(+). It catalyses the reaction L-glutamine + H2O = L-glutamate + NH4(+). It functions in the pathway amino-acid biosynthesis; L-histidine biosynthesis; L-histidine from 5-phospho-alpha-D-ribose 1-diphosphate: step 5/9. Functionally, IGPS catalyzes the conversion of PRFAR and glutamine to IGP, AICAR and glutamate. The HisH subunit catalyzes the hydrolysis of glutamine to glutamate and ammonia as part of the synthesis of IGP and AICAR. The resulting ammonia molecule is channeled to the active site of HisF. This is Imidazole glycerol phosphate synthase subunit HisH from Rhizobium meliloti (strain 1021) (Ensifer meliloti).